The primary structure comprises 168 residues: Ribosome maturation factor RimM (168 aa).

Positions 95-168 constitute a PRC barrel domain; that stretch reads KEGYYWSDLI…QIMVDWELDY (74 aa).

This sequence belongs to the RimM family. Binds ribosomal protein uS19.

It is found in the cytoplasm. An accessory protein needed during the final step in the assembly of 30S ribosomal subunit, possibly for assembly of the head region. Essential for efficient processing of 16S rRNA. May be needed both before and after RbfA during the maturation of 16S rRNA. It has affinity for free ribosomal 30S subunits but not for 70S ribosomes. The polypeptide is Ribosome maturation factor RimM (Nitrosomonas eutropha (strain DSM 101675 / C91 / Nm57)).